A 754-amino-acid polypeptide reads, in one-letter code: 5-methyltetrahydropteroyltriglutamate--homocysteine methyltransferase (754 aa).

5-methyltetrahydropteroyltri-L-glutamate-binding positions include arginine 17 to lysine 20 and lysine 117. Residues isoleucine 431–serine 433 and glutamate 484 each bind L-homocysteine. L-methionine is bound by residues isoleucine 431–serine 433 and glutamate 484. 5-methyltetrahydropteroyltri-L-glutamate contacts are provided by residues arginine 515–cysteine 516 and tryptophan 561. Residue aspartate 599 coordinates L-homocysteine. Aspartate 599 provides a ligand contact to L-methionine. Residue glutamate 605 coordinates 5-methyltetrahydropteroyltri-L-glutamate. Zn(2+) is bound by residues histidine 641, cysteine 643, and glutamate 665. Histidine 694 acts as the Proton donor in catalysis. Cysteine 726 lines the Zn(2+) pocket.

It belongs to the vitamin-B12 independent methionine synthase family. Requires Zn(2+) as cofactor.

It catalyses the reaction 5-methyltetrahydropteroyltri-L-glutamate + L-homocysteine = tetrahydropteroyltri-L-glutamate + L-methionine. It functions in the pathway amino-acid biosynthesis; L-methionine biosynthesis via de novo pathway; L-methionine from L-homocysteine (MetE route): step 1/1. Catalyzes the transfer of a methyl group from 5-methyltetrahydrofolate to homocysteine resulting in methionine formation. This chain is 5-methyltetrahydropteroyltriglutamate--homocysteine methyltransferase, found in Klebsiella pneumoniae subsp. pneumoniae (strain ATCC 700721 / MGH 78578).